Consider the following 118-residue polypeptide: Late cornified envelope protein 1F (118 aa).

Over residues 1-10 the composition is skewed to low complexity; the sequence is MSCQQSQQQC. 2 disordered regions span residues 1-23 and 82-118; these read MSCQQSQQQCQPPPKCTPKCPPK and RRRSHRHRPQSSDCCSQPSAGSSCCGGGSGQHSGGCC. Residues 11–23 show a composition bias toward pro residues; the sequence is QPPPKCTPKCPPK. The segment covering 95–104 has biased composition (low complexity); sequence CCSQPSAGSS. Gly residues predominate over residues 105–118; that stretch reads CCGGGSGQHSGGCC.

It belongs to the LCE family. Skin-specific. Expression was readily detected in adult trunk skin, adult arm skin, fetal skin, penal skin, vulva, esophagus and tongue. Not expressed in the cervix, rectum, lung, colon, or placenta. Expression is observed in the fibroblasts.

Functionally, precursors of the cornified envelope of the stratum corneum. This Homo sapiens (Human) protein is Late cornified envelope protein 1F (LCE1F).